The primary structure comprises 334 residues: Ketol-acid reductoisomerase (NADP(+)) (334 aa).

The region spanning Thr2–Thr181 is the KARI N-terminal Rossmann domain. Residues Tyr25 to Gln28, Arg48, Ser52, and Asp82 to Gln85 contribute to the NADP(+) site. His107 is a catalytic residue. An NADP(+)-binding site is contributed by Gly133. Residues Thr182 to Ile327 form the KARI C-terminal knotted domain. Positions 190, 194, 226, and 230 each coordinate Mg(2+). Ser251 contributes to the substrate binding site.

Belongs to the ketol-acid reductoisomerase family. Requires Mg(2+) as cofactor.

It carries out the reaction (2R)-2,3-dihydroxy-3-methylbutanoate + NADP(+) = (2S)-2-acetolactate + NADPH + H(+). The catalysed reaction is (2R,3R)-2,3-dihydroxy-3-methylpentanoate + NADP(+) = (S)-2-ethyl-2-hydroxy-3-oxobutanoate + NADPH + H(+). Its pathway is amino-acid biosynthesis; L-isoleucine biosynthesis; L-isoleucine from 2-oxobutanoate: step 2/4. It functions in the pathway amino-acid biosynthesis; L-valine biosynthesis; L-valine from pyruvate: step 2/4. In terms of biological role, involved in the biosynthesis of branched-chain amino acids (BCAA). Catalyzes an alkyl-migration followed by a ketol-acid reduction of (S)-2-acetolactate (S2AL) to yield (R)-2,3-dihydroxy-isovalerate. In the isomerase reaction, S2AL is rearranged via a Mg-dependent methyl migration to produce 3-hydroxy-3-methyl-2-ketobutyrate (HMKB). In the reductase reaction, this 2-ketoacid undergoes a metal-dependent reduction by NADPH to yield (R)-2,3-dihydroxy-isovalerate. The polypeptide is Ketol-acid reductoisomerase (NADP(+)) (Staphylococcus haemolyticus (strain JCSC1435)).